The sequence spans 288 residues: Energy-coupling factor transporter ATP-binding protein EcfA2 (288 aa).

One can recognise an ABC transporter domain in the interval 3 to 246; it reads IKLEQLGYCY…PDELVDLGLS (244 aa). 40–47 contacts ATP; it reads GHTGSGKS.

Belongs to the ABC transporter superfamily. Energy-coupling factor EcfA family. As to quaternary structure, forms a stable energy-coupling factor (ECF) transporter complex composed of 2 membrane-embedded substrate-binding proteins (S component), 2 ATP-binding proteins (A component) and 2 transmembrane proteins (T component).

The protein resides in the cell membrane. Its function is as follows. ATP-binding (A) component of a common energy-coupling factor (ECF) ABC-transporter complex. Unlike classic ABC transporters this ECF transporter provides the energy necessary to transport a number of different substrates. In Listeria innocua serovar 6a (strain ATCC BAA-680 / CLIP 11262), this protein is Energy-coupling factor transporter ATP-binding protein EcfA2.